A 528-amino-acid chain; its full sequence is GMP synthase [glutamine-hydrolyzing] (528 aa).

The region spanning 13 to 204 (SILILDFGSQ…VYKISCCTAD (192 aa)) is the Glutamine amidotransferase type-1 domain. The active-site Nucleophile is Cys-90. Residues His-178 and Glu-180 contribute to the active site. Residues 205-403 (WTTETYIEET…LGLPDEIIKR (199 aa)) form the GMPS ATP-PPase domain. An ATP-binding site is contributed by 232 to 238 (SGGVDSS).

In terms of assembly, homodimer.

The catalysed reaction is XMP + L-glutamine + ATP + H2O = GMP + L-glutamate + AMP + diphosphate + 2 H(+). The protein operates within purine metabolism; GMP biosynthesis; GMP from XMP (L-Gln route): step 1/1. In terms of biological role, catalyzes the synthesis of GMP from XMP. The polypeptide is GMP synthase [glutamine-hydrolyzing] (Prochlorococcus marinus (strain AS9601)).